The primary structure comprises 306 residues: Glutaminase (306 aa).

Substrate is bound by residues S64, N115, E159, N166, Y190, Y242, and V260.

It belongs to the glutaminase family. In terms of assembly, homotetramer.

The enzyme catalyses L-glutamine + H2O = L-glutamate + NH4(+). This chain is Glutaminase, found in Vibrio atlanticus (strain LGP32) (Vibrio splendidus (strain Mel32)).